The primary structure comprises 30 residues: L-serine dehydratase, alpha chain (30 aa).

It belongs to the iron-sulfur dependent L-serine dehydratase family. As to quaternary structure, heterodimer of an alpha chain and a beta chain. [4Fe-4S] cluster is required as a cofactor.

The enzyme catalyses L-serine = pyruvate + NH4(+). It functions in the pathway carbohydrate biosynthesis; gluconeogenesis. This chain is L-serine dehydratase, alpha chain, found in Anaerotignum propionicum (Clostridium propionicum).